The following is an 89-amino-acid chain: Small ribosomal subunit protein uS15 (89 aa).

Belongs to the universal ribosomal protein uS15 family. As to quaternary structure, part of the 30S ribosomal subunit. Forms a bridge to the 50S subunit in the 70S ribosome, contacting the 23S rRNA.

One of the primary rRNA binding proteins, it binds directly to 16S rRNA where it helps nucleate assembly of the platform of the 30S subunit by binding and bridging several RNA helices of the 16S rRNA. Its function is as follows. Forms an intersubunit bridge (bridge B4) with the 23S rRNA of the 50S subunit in the ribosome. This is Small ribosomal subunit protein uS15 from Mycobacterium avium (strain 104).